A 513-amino-acid chain; its full sequence is ATP synthase subunit alpha (513 aa).

ATP is bound at residue 169–176 (GDRQVGKT).

The protein belongs to the ATPase alpha/beta chains family. As to quaternary structure, F-type ATPases have 2 components, CF(1) - the catalytic core - and CF(0) - the membrane proton channel. CF(1) has five subunits: alpha(3), beta(3), gamma(1), delta(1), epsilon(1). CF(0) has three main subunits: a(1), b(2) and c(9-12). The alpha and beta chains form an alternating ring which encloses part of the gamma chain. CF(1) is attached to CF(0) by a central stalk formed by the gamma and epsilon chains, while a peripheral stalk is formed by the delta and b chains.

The protein resides in the cell inner membrane. It carries out the reaction ATP + H2O + 4 H(+)(in) = ADP + phosphate + 5 H(+)(out). Its function is as follows. Produces ATP from ADP in the presence of a proton gradient across the membrane. The alpha chain is a regulatory subunit. The chain is ATP synthase subunit alpha from Aeromonas hydrophila subsp. hydrophila (strain ATCC 7966 / DSM 30187 / BCRC 13018 / CCUG 14551 / JCM 1027 / KCTC 2358 / NCIMB 9240 / NCTC 8049).